A 91-amino-acid polypeptide reads, in one-letter code: Small ribosomal subunit protein uS19 (91 aa).

The protein belongs to the universal ribosomal protein uS19 family.

In terms of biological role, protein S19 forms a complex with S13 that binds strongly to the 16S ribosomal RNA. The polypeptide is Small ribosomal subunit protein uS19 (Marinomonas sp. (strain MWYL1)).